A 354-amino-acid polypeptide reads, in one-letter code: NADH-quinone oxidoreductase subunit H (354 aa).

8 helical membrane-spanning segments follow: residues 25–45, 91–111, 126–146, 170–190, 205–225, 267–287, 290–310, and 330–350; these read LVRI…LILW, WIYM…WAVI, LLYA…AGWA, MGFA…SGIV, FLSW…ISGI, IVIS…PFGF, FIPG…VFIW, and IFIP…MSPL.

This sequence belongs to the complex I subunit 1 family. In terms of assembly, NDH-1 is composed of 14 different subunits. Subunits NuoA, H, J, K, L, M, N constitute the membrane sector of the complex.

The protein resides in the cell inner membrane. The enzyme catalyses a quinone + NADH + 5 H(+)(in) = a quinol + NAD(+) + 4 H(+)(out). Functionally, NDH-1 shuttles electrons from NADH, via FMN and iron-sulfur (Fe-S) centers, to quinones in the respiratory chain. The immediate electron acceptor for the enzyme in this species is believed to be ubiquinone. Couples the redox reaction to proton translocation (for every two electrons transferred, four hydrogen ions are translocated across the cytoplasmic membrane), and thus conserves the redox energy in a proton gradient. This subunit may bind ubiquinone. In Paraburkholderia xenovorans (strain LB400), this protein is NADH-quinone oxidoreductase subunit H.